A 589-amino-acid polypeptide reads, in one-letter code: Protein FAM161B (589 aa).

Disordered regions lie at residues 1–166 (MTVG…VCSW), 265–297 (KKEQ…RKIP), and 386–444 (AERR…GLAS). Positions 92-106 (PDSDLNDAEDEEDLE) are enriched in acidic residues. Positions 151 to 166 (TSDSGPPSQHRSVCSW) are enriched in polar residues. Residues 265–275 (KKEQQKEDAPQ) are compositionally biased toward basic and acidic residues. The segment covering 287 to 297 (SPKKATSRKIP) has biased composition (basic residues). Residues 386 to 396 (AERRETRETTR) are compositionally biased toward basic and acidic residues. Residues 510–577 (EEVFKAKLKE…ALKQAGLEEE (68 aa)) are a coiled coil.

Belongs to the FAM161 family. Interacts with FAM161A.

The chain is Protein FAM161B (Fam161b) from Mus musculus (Mouse).